A 355-amino-acid chain; its full sequence is MSCLLIAASGTGGHLFPALAVAEALPESWKVSWLGVSDRLESSLIPKKYQLSTIGVEGVQSRGIKRIVQIFKLLAATGSVICLIRRNRIQIVLTTGGYIAVPAVLAAKLTGKKVILHESNAIPGKATRLLGRLCDKVALGWPPAKKKLPGCKVTVTGTPVRKSFLMKNKLPSWAPSGPGPLIVVIGGSQGAVGLNDMVRAVLPFLLDQGCRIVHITGKNAQSKIIHTNLVEQPFSDDIPGLLQNADLVISRSGAGALSEFAVCEVPAILVPYPYAADNHQECNAIYASQFGAALIVHQHEPEGKALRNALERLLKKNLSQADTVENLLNLMRKGMAKMAVRDAHIHLMSLLKEAS.

UDP-N-acetyl-alpha-D-glucosamine is bound by residues 11–13 (TGG), N120, R161, S188, and Q280.

This sequence belongs to the glycosyltransferase 28 family. MurG subfamily.

The protein resides in the cell inner membrane. The catalysed reaction is di-trans,octa-cis-undecaprenyl diphospho-N-acetyl-alpha-D-muramoyl-L-alanyl-D-glutamyl-meso-2,6-diaminopimeloyl-D-alanyl-D-alanine + UDP-N-acetyl-alpha-D-glucosamine = di-trans,octa-cis-undecaprenyl diphospho-[N-acetyl-alpha-D-glucosaminyl-(1-&gt;4)]-N-acetyl-alpha-D-muramoyl-L-alanyl-D-glutamyl-meso-2,6-diaminopimeloyl-D-alanyl-D-alanine + UDP + H(+). The protein operates within cell wall biogenesis; peptidoglycan biosynthesis. Its function is as follows. Cell wall formation. Catalyzes the transfer of a GlcNAc subunit on undecaprenyl-pyrophosphoryl-MurNAc-pentapeptide (lipid intermediate I) to form undecaprenyl-pyrophosphoryl-MurNAc-(pentapeptide)GlcNAc (lipid intermediate II). The sequence is that of UDP-N-acetylglucosamine--N-acetylmuramyl-(pentapeptide) pyrophosphoryl-undecaprenol N-acetylglucosamine transferase from Prochlorococcus marinus (strain MIT 9211).